Reading from the N-terminus, the 507-residue chain is Probable Xaa-Pro aminopeptidase ARB_01886 (507 aa).

The Mn(2+) site is built by Asp275, Asp286, Glu434, and Glu478.

The protein belongs to the peptidase M24B family. Mn(2+) serves as cofactor.

The enzyme catalyses Release of any N-terminal amino acid, including proline, that is linked to proline, even from a dipeptide or tripeptide.. Its function is as follows. Catalyzes the removal of a penultimate prolyl residue from the N-termini of peptides. The chain is Probable Xaa-Pro aminopeptidase ARB_01886 from Arthroderma benhamiae (strain ATCC MYA-4681 / CBS 112371) (Trichophyton mentagrophytes).